The primary structure comprises 150 residues: Large ribosomal subunit protein bL9 (150 aa).

Belongs to the bacterial ribosomal protein bL9 family.

Its function is as follows. Binds to the 23S rRNA. The chain is Large ribosomal subunit protein bL9 from Shewanella baltica (strain OS155 / ATCC BAA-1091).